The sequence spans 256 residues: MGNMTVKQIEKSVEGLDLDKALEKLYCLKAEFGDRVDKIIEKYEKKKLKYEKELNRYLEMCIYEKEAYQRGYKLIAGIDEAGRGPLAGPVVAAAVILPQDVFIEGLNDSKKLTENQREKLFDVINDKAIGVGIGIVDEKQIDEINILNATKKAMKLAVGNLKPVPDILFIDSLKLDDINIEQNSIVKGDAKSVSIAAASIIAKVTRDRILREMDKKYPMYGFARHKGYGTGEHIEAIKKYGICPIHRVSFTKNFIV.

In terms of domain architecture, RNase H type-2 spans 73–256 (KLIAGIDEAG…RVSFTKNFIV (184 aa)). Residues D79, E80, and D171 each coordinate a divalent metal cation.

It belongs to the RNase HII family. The cofactor is Mn(2+). Mg(2+) is required as a cofactor.

The protein resides in the cytoplasm. The catalysed reaction is Endonucleolytic cleavage to 5'-phosphomonoester.. Functionally, endonuclease that specifically degrades the RNA of RNA-DNA hybrids. In Acetivibrio thermocellus (strain ATCC 27405 / DSM 1237 / JCM 9322 / NBRC 103400 / NCIMB 10682 / NRRL B-4536 / VPI 7372) (Clostridium thermocellum), this protein is Ribonuclease HII.